The following is a 196-amino-acid chain: Urease accessory protein UreE (196 aa).

The disordered stretch occupies residues 150–196; sequence RGAYSGGHDHGHAHAHSHAEAHSHAHGESHSHSHSHSHDDHHHHDHD. Over residues 156–196 the composition is skewed to basic and acidic residues; the sequence is GHDHGHAHAHSHAEAHSHAHGESHSHSHSHSHDDHHHHDHD.

Belongs to the UreE family.

It is found in the cytoplasm. Involved in urease metallocenter assembly. Binds nickel. Probably functions as a nickel donor during metallocenter assembly. In Mesorhizobium japonicum (strain LMG 29417 / CECT 9101 / MAFF 303099) (Mesorhizobium loti (strain MAFF 303099)), this protein is Urease accessory protein UreE.